Reading from the N-terminus, the 252-residue chain is Ubiquinone biosynthesis O-methyltransferase (252 aa).

4 residues coordinate S-adenosyl-L-methionine: R36, G60, D81, and L123.

The protein belongs to the methyltransferase superfamily. UbiG/COQ3 family.

It catalyses the reaction a 3-demethylubiquinol + S-adenosyl-L-methionine = a ubiquinol + S-adenosyl-L-homocysteine + H(+). It carries out the reaction a 3-(all-trans-polyprenyl)benzene-1,2-diol + S-adenosyl-L-methionine = a 2-methoxy-6-(all-trans-polyprenyl)phenol + S-adenosyl-L-homocysteine + H(+). Its pathway is cofactor biosynthesis; ubiquinone biosynthesis. O-methyltransferase that catalyzes the 2 O-methylation steps in the ubiquinone biosynthetic pathway. This Rickettsia prowazekii (strain Madrid E) protein is Ubiquinone biosynthesis O-methyltransferase.